Here is a 163-residue protein sequence, read N- to C-terminus: Crossover junction endodeoxyribonuclease RuvC (163 aa).

Active-site residues include Asp-9, Glu-76, and Asp-148. Residues Asp-9, Glu-76, and Asp-148 each coordinate Mg(2+).

It belongs to the RuvC family. As to quaternary structure, homodimer which binds Holliday junction (HJ) DNA. The HJ becomes 2-fold symmetrical on binding to RuvC with unstacked arms; it has a different conformation from HJ DNA in complex with RuvA. In the full resolvosome a probable DNA-RuvA(4)-RuvB(12)-RuvC(2) complex forms which resolves the HJ. Mg(2+) is required as a cofactor.

It is found in the cytoplasm. The catalysed reaction is Endonucleolytic cleavage at a junction such as a reciprocal single-stranded crossover between two homologous DNA duplexes (Holliday junction).. In terms of biological role, the RuvA-RuvB-RuvC complex processes Holliday junction (HJ) DNA during genetic recombination and DNA repair. Endonuclease that resolves HJ intermediates. Cleaves cruciform DNA by making single-stranded nicks across the HJ at symmetrical positions within the homologous arms, yielding a 5'-phosphate and a 3'-hydroxyl group; requires a central core of homology in the junction. The consensus cleavage sequence is 5'-(A/T)TT(C/G)-3'. Cleavage occurs on the 3'-side of the TT dinucleotide at the point of strand exchange. HJ branch migration catalyzed by RuvA-RuvB allows RuvC to scan DNA until it finds its consensus sequence, where it cleaves and resolves the cruciform DNA. The chain is Crossover junction endodeoxyribonuclease RuvC from Trichormus variabilis (strain ATCC 29413 / PCC 7937) (Anabaena variabilis).